Here is a 393-residue protein sequence, read N- to C-terminus: Cytochrome b (393 aa).

The next 4 helical transmembrane spans lie at 32–52, 76–98, 113–133, and 179–199; these read FGSL…FLAM, WLIR…LHIG, LWSI…LGYV, and FFSL…MHLL. Heme b is bound by residues His-82 and His-96. Heme b-binding residues include His-183 and His-197. His-202 is a binding site for a ubiquinone. 4 consecutive transmembrane segments (helical) span residues 225–245, 289–309, 321–341, and 348–368; these read FTFK…LFVF, LIGV…PILD, LMRF…FIGS, and YVEI…VVVP.

This sequence belongs to the cytochrome b family. In terms of assembly, fungal cytochrome b-c1 complex contains 10 subunits; 3 respiratory subunits, 2 core proteins and 5 low-molecular weight proteins. Cytochrome b-c1 complex is a homodimer. Heme b is required as a cofactor.

The protein localises to the mitochondrion inner membrane. Component of the ubiquinol-cytochrome c reductase complex (complex III or cytochrome b-c1 complex) that is part of the mitochondrial respiratory chain. The b-c1 complex mediates electron transfer from ubiquinol to cytochrome c. Contributes to the generation of a proton gradient across the mitochondrial membrane that is then used for ATP synthesis. In Mycosarcoma maydis (Corn smut fungus), this protein is Cytochrome b (COB).